Reading from the N-terminus, the 132-residue chain is Small ribosomal subunit protein uS8 (132 aa).

The protein belongs to the universal ribosomal protein uS8 family. As to quaternary structure, part of the 30S ribosomal subunit. Contacts proteins S5 and S12.

Functionally, one of the primary rRNA binding proteins, it binds directly to 16S rRNA central domain where it helps coordinate assembly of the platform of the 30S subunit. The sequence is that of Small ribosomal subunit protein uS8 from Pseudarthrobacter chlorophenolicus (strain ATCC 700700 / DSM 12829 / CIP 107037 / JCM 12360 / KCTC 9906 / NCIMB 13794 / A6) (Arthrobacter chlorophenolicus).